A 141-amino-acid polypeptide reads, in one-letter code: Large ribosomal subunit protein uL11 (141 aa).

Belongs to the universal ribosomal protein uL11 family. Part of the ribosomal stalk of the 50S ribosomal subunit. Interacts with L10 and the large rRNA to form the base of the stalk. L10 forms an elongated spine to which L12 dimers bind in a sequential fashion forming a multimeric L10(L12)X complex. One or more lysine residues are methylated.

In terms of biological role, forms part of the ribosomal stalk which helps the ribosome interact with GTP-bound translation factors. This chain is Large ribosomal subunit protein uL11, found in Leptospira biflexa serovar Patoc (strain Patoc 1 / Ames).